The sequence spans 154 residues: Putative pre-16S rRNA nuclease (154 aa).

It belongs to the YqgF nuclease family.

It is found in the cytoplasm. Functionally, could be a nuclease involved in processing of the 5'-end of pre-16S rRNA. This is Putative pre-16S rRNA nuclease from Gluconacetobacter diazotrophicus (strain ATCC 49037 / DSM 5601 / CCUG 37298 / CIP 103539 / LMG 7603 / PAl5).